A 722-amino-acid chain; its full sequence is Polyribonucleotide nucleotidyltransferase (722 aa).

Mg(2+)-binding residues include aspartate 495 and aspartate 501. The region spanning 562 to 621 is the KH domain; it reads PRLLSFRIDPELIGTVIGPGGRTIKGITERTNTKIDIEDGGIVTIASHDGAAAEEAQRII. Positions 631 to 699 constitute an S1 motif domain; it reads GEIFPGSITR…NRGRINLTLR (69 aa). The tract at residues 700–722 is disordered; the sequence is GVSQNGGMSNYPEPTPTPVAPLT. Over residues 712–722 the composition is skewed to pro residues; that stretch reads EPTPTPVAPLT.

Belongs to the polyribonucleotide nucleotidyltransferase family. The cofactor is Mg(2+).

The protein resides in the cytoplasm. The catalysed reaction is RNA(n+1) + phosphate = RNA(n) + a ribonucleoside 5'-diphosphate. Its function is as follows. Involved in mRNA degradation. Catalyzes the phosphorolysis of single-stranded polyribonucleotides processively in the 3'- to 5'-direction. The chain is Polyribonucleotide nucleotidyltransferase from Prochlorococcus marinus (strain NATL2A).